A 247-amino-acid polypeptide reads, in one-letter code: 2,5-diamino-6-ribosylamino-4(3H)-pyrimidinone 5'-phosphate reductase (247 aa).

Residues Thr-75, Asp-79, Gly-165, and 187–191 each bind NADP(+); that span reads GASII.

This sequence belongs to the HTP reductase family. Homodimer.

The enzyme catalyses 2,5-diamino-6-(1-D-ribitylamino)pyrimidin-4(3H)-one 5'-phosphate + NADP(+) = 2,5-diamino-6-(1-D-ribosylamino)pyrimidin-4(3H)-one 5'-phosphate + NADPH + H(+). The catalysed reaction is 2,5-diamino-6-(1-D-ribitylamino)pyrimidin-4(3H)-one 5'-phosphate + NAD(+) = 2,5-diamino-6-(1-D-ribosylamino)pyrimidin-4(3H)-one 5'-phosphate + NADH + H(+). The protein operates within cofactor biosynthesis; riboflavin biosynthesis. Functionally, catalyzes an early step in riboflavin biosynthesis, the NADPH-dependent reduction of the ribose side chain of 2,5-diamino-6-ribosylamino-4(3H)-pyrimidinone 5'-phosphate, yielding 2,5-diamino-6-ribitylamino-4(3H)-pyrimidinone 5'-phosphate. The polypeptide is 2,5-diamino-6-ribosylamino-4(3H)-pyrimidinone 5'-phosphate reductase (RIB7) (Debaryomyces hansenii (strain ATCC 36239 / CBS 767 / BCRC 21394 / JCM 1990 / NBRC 0083 / IGC 2968) (Yeast)).